A 287-amino-acid chain; its full sequence is MINQANNQVNFSEQQFVHHKRFSVIRLTFSVAAIGILFIFLIGFGVQQLLTNTTSLGTLASDIRTLGTIAFVASLVSLILYFVTAFKLRNRNTTLAWFWGLIIADVISYGITLGVLLTLATTQLRELIDFKFSDIVFAFLGAALVYGTVWGLSALPSQQRRYQQTQTLFRIFIWAFFISIIASLLTFVLNFTVFRGGRTNILDLLFPGLSLIVGGIFSLLSVYFVCLQIRNEQDLVKLYESQDPALAKAQMWRSALFFGAWLVSSFMNLVYFILRIILLTRNLSRAF.

7 helical membrane passes run Leu-27–Gln-47, Leu-66–Phe-86, Trp-97–Leu-117, Ile-135–Leu-155, Ile-171–Phe-191, Leu-205–Val-225, and Ser-254–Leu-274.

Its subcellular location is the cell membrane. This is an uncharacterized protein from Mycoplasma pneumoniae (strain ATCC 29342 / M129 / Subtype 1) (Mycoplasmoides pneumoniae).